Reading from the N-terminus, the 664-residue chain is NAD(P)H-quinone oxidoreductase chain 5 (664 aa).

Transmembrane regions (helical) follow at residues 7-27, 39-59, 91-111, 120-140, 144-164, 187-207, 219-239, 258-278, 290-310, 327-347, 352-372, 395-415, 420-440, 495-515, 541-561, and 643-663; these read YAWL…IGLI, LNAV…FGLL, HLSA…MIYT, GYVR…GLVF, LVQV…LIGF, FGLL…EFDL, GQIS…GPVA, TPIS…FLVA, AMNV…TIAL, LGYM…FHLM, FKAM…EVVG, ATTF…AGFW, ILGL…ATAG, FPLM…VPWG, FLIM…IASL, and VQFY…FFSV.

This sequence belongs to the complex I subunit 5 family.

It is found in the cell membrane. It catalyses the reaction a plastoquinone + NADH + (n+1) H(+)(in) = a plastoquinol + NAD(+) + n H(+)(out). It carries out the reaction a plastoquinone + NADPH + (n+1) H(+)(in) = a plastoquinol + NADP(+) + n H(+)(out). Functionally, NDH-1 shuttles electrons from NAD(P)H, via FMN and iron-sulfur (Fe-S) centers, to quinones in the respiratory chain. The immediate electron acceptor for the enzyme in this species is believed to be plastoquinone. Couples the redox reaction to proton translocation (for every two electrons transferred, four hydrogen ions are translocated across the cytoplasmic membrane), and thus conserves the redox energy in a proton gradient. This is NAD(P)H-quinone oxidoreductase chain 5 (ndhF) from Picosynechococcus sp. (strain ATCC 27264 / PCC 7002 / PR-6) (Agmenellum quadruplicatum).